A 455-amino-acid polypeptide reads, in one-letter code: Chromosomal replication initiator protein DnaA (455 aa).

Residues 1-74 are domain I, interacts with DnaA modulators; it reads MFNFEKFWQH…IQSAYGYAGV (74 aa). A domain II region spans residues 74–117; it reads VELLPVFQISEDSDTPERIVTPEPQHNLQTTPTRAPQREFAKDL. A domain III, AAA+ region region spans residues 118-334; sequence KLNEKYTFDN…GALVKVQAYA (217 aa). Positions 162, 164, 165, and 166 each coordinate ATP. Residues 335-455 are domain IV, binds dsDNA; sequence TIEKADIDIN…VFDLKQMLEH (121 aa).

It belongs to the DnaA family. As to quaternary structure, oligomerizes as a right-handed, spiral filament on DNA at oriC.

It localises to the cytoplasm. Its function is as follows. Plays an essential role in the initiation and regulation of chromosomal replication. ATP-DnaA binds to the origin of replication (oriC) to initiate formation of the DNA replication initiation complex once per cell cycle. Binds the DnaA box (a 9 base pair repeat at the origin) and separates the double-stranded (ds)DNA. Forms a right-handed helical filament on oriC DNA; dsDNA binds to the exterior of the filament while single-stranded (ss)DNA is stabiized in the filament's interior. The ATP-DnaA-oriC complex binds and stabilizes one strand of the AT-rich DNA unwinding element (DUE), permitting loading of DNA polymerase. After initiation quickly degrades to an ADP-DnaA complex that is not apt for DNA replication. Binds acidic phospholipids. The chain is Chromosomal replication initiator protein DnaA from Lactobacillus acidophilus (strain ATCC 700396 / NCK56 / N2 / NCFM).